Here is a 428-residue protein sequence, read N- to C-terminus: Ribosome biogenesis protein WDR12 homolog (428 aa).

Residues 13 to 97 (LQVHFTTKQK…EDTIELEYVE (85 aa)) are ubiquitin-like (UBL) domain. WD repeat units follow at residues 109-146 (LHDD…KLTI), 148-190 (GHVA…NTAE), 197-236 (GHER…DKGE), 259-297 (GHRE…IKTE), 299-338 (TGNK…GNFV), 344-384 (GHSQ…APIF), and 388-426 (GHED…DNTK).

The protein belongs to the WD repeat WDR12/YTM1 family.

Its subcellular location is the nucleus. It is found in the nucleolus. The protein resides in the nucleoplasm. Required for maturation of ribosomal RNAs and formation of the large ribosomal subunit. The polypeptide is Ribosome biogenesis protein WDR12 homolog (Anopheles gambiae (African malaria mosquito)).